The primary structure comprises 523 residues: 2-isopropylmalate synthase (523 aa).

Residues 5–267 (VIIFDTTLRD…ETGINAKEIH (263 aa)) enclose the Pyruvate carboxyltransferase domain. The Mn(2+) site is built by Asp14, His202, His204, and Asn238. Residues 392 to 523 (KLQQLVVHSD…QQEKQVLGGV (132 aa)) are regulatory domain.

The protein belongs to the alpha-IPM synthase/homocitrate synthase family. LeuA type 1 subfamily. As to quaternary structure, homodimer. It depends on Mn(2+) as a cofactor.

The protein resides in the cytoplasm. The enzyme catalyses 3-methyl-2-oxobutanoate + acetyl-CoA + H2O = (2S)-2-isopropylmalate + CoA + H(+). The protein operates within amino-acid biosynthesis; L-leucine biosynthesis; L-leucine from 3-methyl-2-oxobutanoate: step 1/4. Functionally, catalyzes the condensation of the acetyl group of acetyl-CoA with 3-methyl-2-oxobutanoate (2-ketoisovalerate) to form 3-carboxy-3-hydroxy-4-methylpentanoate (2-isopropylmalate). The protein is 2-isopropylmalate synthase of Shewanella piezotolerans (strain WP3 / JCM 13877).